The chain runs to 449 residues: Probable glycine dehydrogenase (decarboxylating) subunit 1 (449 aa).

It belongs to the GcvP family. N-terminal subunit subfamily. As to quaternary structure, the glycine cleavage system is composed of four proteins: P, T, L and H. In this organism, the P 'protein' is a heterodimer of two subunits.

It carries out the reaction N(6)-[(R)-lipoyl]-L-lysyl-[glycine-cleavage complex H protein] + glycine + H(+) = N(6)-[(R)-S(8)-aminomethyldihydrolipoyl]-L-lysyl-[glycine-cleavage complex H protein] + CO2. Its function is as follows. The glycine cleavage system catalyzes the degradation of glycine. The P protein binds the alpha-amino group of glycine through its pyridoxal phosphate cofactor; CO(2) is released and the remaining methylamine moiety is then transferred to the lipoamide cofactor of the H protein. The chain is Probable glycine dehydrogenase (decarboxylating) subunit 1 from Sulfurisphaera tokodaii (strain DSM 16993 / JCM 10545 / NBRC 100140 / 7) (Sulfolobus tokodaii).